A 994-amino-acid polypeptide reads, in one-letter code: NACHT, LRR and PYD domains-containing protein 4 (994 aa).

In terms of domain architecture, Pyrin spans M1–G94. An NACHT domain is found at R149–H472. G155–T162 contributes to the ATP binding site. 8 LRR repeats span residues S637–N660, Y698–P721, A722–G745, N750–P777, N806–H833, N863–R886, S920–E943, and E949–A972.

It belongs to the NLRP family. Interacts with CHUK/IKKA, inhibiting its kinase activity.

Its function is as follows. May be involved in inflammation and recognition of cytosolic pathogen-associated molecular patterns (PAMPs) not intercepted by membrane-bound receptors. Acts as a negative regulator of the type I interferon signaling pathway by serving as an adapter to promote DTX4-mediated ubiquitination of activated TBK1, and its subsequent degradation. Suppresses NF-kappaB induction by the cytokines TNFA and IL1B, suggesting that it operates at a point of convergence in these two cytokine signaling pathways. This chain is NACHT, LRR and PYD domains-containing protein 4, found in Homo sapiens (Human).